The chain runs to 1334 residues: Rho1 guanine nucleotide exchange factor 1 (1334 aa).

Disordered stretches follow at residues 1–89, 135–182, 203–245, and 381–402; these read MDYR…ASPV, PQVS…SDSV, LDQN…TSGT, and SLINDRSSTTTPTFVNSEASSP. The span at 138 to 149 shows a compositional bias: low complexity; that stretch reads SNHAPNNSNSPS. Over residues 150 to 164 the composition is skewed to polar residues; the sequence is LTWHTSSGDDSNQNP. Low complexity predominate over residues 170 to 180; sequence QSQSSTSPVSD. Composition is skewed to polar residues over residues 213-227, 234-245, and 381-400; these read VRSSKNPFLSSNSRL, HTVGSHSFTSGT, and SLINDRSSTTTPTFVNSEAS. A Phosphoserine modification is found at serine 381. A DH domain is found at 621-808; the sequence is KRQEVICEVI…RGFLSRLNVE (188 aa). Residues 843–973 form the PH domain; it reads QLIFKGPLKK…WLEHIDNQQT (131 aa). A CNH domain is found at 995 to 1293; that stretch reads DNKVNAIGVY…RLLADGRGKL (299 aa).

It localises to the cytoplasm. Its function is as follows. Stimulates the exchange of Rho1 and Rho5 GDP-bound form into GTP-bound form. Controls septum formation, cell wall synthesis and localization of F-actin patches. Coordinates actin deposition with cell wall biosynthesis during bipolar growth. This Schizosaccharomyces pombe (strain 972 / ATCC 24843) (Fission yeast) protein is Rho1 guanine nucleotide exchange factor 1 (rgf1).